The primary structure comprises 118 residues: Small ribosomal subunit protein uS13 (118 aa).

Positions Gly-94–Lys-118 are disordered.

It belongs to the universal ribosomal protein uS13 family. Part of the 30S ribosomal subunit. Forms a loose heterodimer with protein S19. Forms two bridges to the 50S subunit in the 70S ribosome.

Its function is as follows. Located at the top of the head of the 30S subunit, it contacts several helices of the 16S rRNA. In the 70S ribosome it contacts the 23S rRNA (bridge B1a) and protein L5 of the 50S subunit (bridge B1b), connecting the 2 subunits; these bridges are implicated in subunit movement. Contacts the tRNAs in the A and P-sites. The sequence is that of Small ribosomal subunit protein uS13 from Salmonella typhi.